A 235-amino-acid chain; its full sequence is Probable transcriptional regulatory protein Ccon26_04940 (235 aa).

This sequence belongs to the TACO1 family.

The protein localises to the cytoplasm. The sequence is that of Probable transcriptional regulatory protein Ccon26_04940 from Campylobacter concisus (strain 13826).